We begin with the raw amino-acid sequence, 746 residues long: Catalase-peroxidase (746 aa).

The span at 1 to 20 shows a compositional bias: polar residues; it reads MSSDTSSSRPPQPDSGTASK. A disordered region spans residues 1-42; it reads MSSDTSSSRPPQPDSGTASKSESENPAIPSPKPKAHAPLTNR. Positions 113 to 236 form a cross-link, tryptophyl-tyrosyl-methioninium (Trp-Tyr) (with M-262); that stretch reads WHAAGTYRIH…YGATTMGLIY (124 aa). Histidine 114 functions as the Proton acceptor in the catalytic mechanism. A cross-link (tryptophyl-tyrosyl-methioninium (Tyr-Met) (with W-113)) is located at residues 236-262; that stretch reads YVNPEGPEGKPDPIAAAIDIRETFGRM. Histidine 277 lines the heme b pocket.

Belongs to the peroxidase family. Peroxidase/catalase subfamily. As to quaternary structure, homodimer or homotetramer. Requires heme b as cofactor. Formation of the three residue Trp-Tyr-Met cross-link is important for the catalase, but not the peroxidase activity of the enzyme.

The catalysed reaction is H2O2 + AH2 = A + 2 H2O. The enzyme catalyses 2 H2O2 = O2 + 2 H2O. Bifunctional enzyme with both catalase and broad-spectrum peroxidase activity. May play a role in the intracellular survival of mycobacteria. In Mycobacterium intracellulare, this protein is Catalase-peroxidase.